Reading from the N-terminus, the 64-residue chain is Large ribosomal subunit protein bL28 (64 aa).

It belongs to the bacterial ribosomal protein bL28 family.

The polypeptide is Large ribosomal subunit protein bL28 (Desulfotalea psychrophila (strain LSv54 / DSM 12343)).